The primary structure comprises 225 residues: UPF0758 protein BCQ_4241 (225 aa).

Residues 103-225 (SIRSPEDCAR…FVSLKEKGHI (123 aa)) enclose the MPN domain. Zn(2+) is bound by residues histidine 174, histidine 176, and aspartate 187. The JAMM motif motif lies at 174-187 (HNHPSGDPAPSRED).

Belongs to the UPF0758 family.

This chain is UPF0758 protein BCQ_4241, found in Bacillus cereus (strain Q1).